A 378-amino-acid chain; its full sequence is Schlafen family member 2 (378 aa).

Belongs to the Schlafen family. Mainly expressed in the thymus, lymph node and spleen.

It is found in the cytoplasm. Functionally, tRNA-binding protein involved in T-cell mediated immunity. Plays a key role during the metabolic reprograming phase of activated T-cell, when T-cells produce reactive oxygen species (ROS): acts by binding tRNAs and protecting them from cleavage by the oxidative stress-activated ribonuclease angiogenin (ANG). Also required for T-cell quiescence maintenance. This chain is Schlafen family member 2, found in Mus musculus (Mouse).